Reading from the N-terminus, the 508-residue chain is WD repeat-containing protein DDB_G0290555 (508 aa).

WD repeat units lie at residues 32–74 (TSEL…LIGE), 159–198 (NVAT…KTYS), 252–292 (FSKH…QVGS), and 295–334 (DSAG…MLHK). Residues 368 to 508 (ENKNRINNDD…KKFAGLKKRK (141 aa)) are disordered. Residues 399-435 (MDSDDDIEDGDDNDVEFPMEADSDDSDFDLGNSDDDN) show a composition bias toward acidic residues. Over residues 436 to 446 (ISVKKENKGDS) the composition is skewed to basic and acidic residues. Over residues 447–456 (DDSDDDSDED) the composition is skewed to acidic residues. A compositionally biased stretch (low complexity) spans 471-493 (NNNNNNNKGKNNKGKNNSSTKKT). Residues 497–508 (LKKKFAGLKKRK) are compositionally biased toward basic residues.

The protein is WD repeat-containing protein DDB_G0290555 of Dictyostelium discoideum (Social amoeba).